A 299-amino-acid chain; its full sequence is NAD kinase (299 aa).

Asp78 acts as the Proton acceptor in catalysis. NAD(+)-binding positions include 78–79 (DG), 151–152 (ND), Lys162, Arg179, Asp181, 192–197 (TAYALS), and Gln252.

This sequence belongs to the NAD kinase family. Requires a divalent metal cation as cofactor.

It localises to the cytoplasm. It catalyses the reaction NAD(+) + ATP = ADP + NADP(+) + H(+). In terms of biological role, involved in the regulation of the intracellular balance of NAD and NADP, and is a key enzyme in the biosynthesis of NADP. Catalyzes specifically the phosphorylation on 2'-hydroxyl of the adenosine moiety of NAD to yield NADP. The sequence is that of NAD kinase from Coxiella burnetii (strain CbuG_Q212) (Coxiella burnetii (strain Q212)).